A 146-amino-acid polypeptide reads, in one-letter code: Core protein D2 (146 aa).

It belongs to the orthopoxvirus OPG114 family. As to quaternary structure, part of a complex composed of the kinase OPG054, OPG092, OPG100, OPG114, OPG115, OPG142 and OPG157.

The protein localises to the virion. Functionally, late protein which is part of a large complex required for early virion morphogenesis. This complex participates in the formation of virosomes and the incorporation of virosomal contents into nascent immature virions. This is Core protein D2 (OPG114) from Vaccinia virus (strain Copenhagen) (VACV).